A 410-amino-acid chain; its full sequence is Adenosylhomocysteinase (410 aa).

Positions 117 and 142 each coordinate substrate. 143–145 lines the NAD(+) pocket; that stretch reads TTT. Residues K172 and D176 each contribute to the substrate site. NAD(+) is bound by residues N177, 206–211, E229, 285–287, and N332; these read GYGYCG and AGH.

It belongs to the adenosylhomocysteinase family. It depends on NAD(+) as a cofactor.

Its subcellular location is the cytoplasm. It carries out the reaction S-adenosyl-L-homocysteine + H2O = L-homocysteine + adenosine. It participates in amino-acid biosynthesis; L-homocysteine biosynthesis; L-homocysteine from S-adenosyl-L-homocysteine: step 1/1. May play a key role in the regulation of the intracellular concentration of adenosylhomocysteine. This Thermoplasma volcanium (strain ATCC 51530 / DSM 4299 / JCM 9571 / NBRC 15438 / GSS1) protein is Adenosylhomocysteinase.